We begin with the raw amino-acid sequence, 570 residues long: Protein NRT1/ PTR FAMILY 8.2 (570 aa).

Thr99 bears the Phosphothreonine mark. Transmembrane regions (helical) follow at residues Ile100 to Val120, Ala136 to Ile156, Phe182 to Val202, Trp210 to Ala230, Ile335 to Leu355, Ile370 to Tyr390, Ile414 to Ala434, Ile454 to Gly474, Ala493 to Val513, and Tyr537 to Ala557.

Belongs to the major facilitator superfamily. Proton-dependent oligopeptide transporter (POT/PTR) (TC 2.A.17) family. In terms of tissue distribution, expressed in developing and germinating pollen grains and ovules.

Its subcellular location is the cell membrane. In terms of biological role, peptide transporter. Mediates the transport of di- and tripeptides. High affinity transporter. Involved in the uptake of peptides during pollen germination and tube growth. The sequence is that of Protein NRT1/ PTR FAMILY 8.2 (NPF8.2) from Arabidopsis thaliana (Mouse-ear cress).